We begin with the raw amino-acid sequence, 941 residues long: Cilia- and flagella-associated protein 69 (941 aa).

Residues 1-14 (MWTEEAGATAEAQE) are compositionally biased toward low complexity. The disordered stretch occupies residues 1–26 (MWTEEAGATAEAQESGIRNKSSSSSQ). Residues 16-26 (GIRNKSSSSSQ) show a composition bias toward polar residues.

Highly expressed in the testis, specifically in sperm (at protein level). Expressed in the brain, kidney, liver, lung, and intestine.

It localises to the cell projection. It is found in the cilium. The protein resides in the flagellum. Cilium- and flagellum-associated protein. In the olfactory epithelium, regulates the speed of activation and termination of the odor response and thus contributes to the robustness of olfactory transduction pathways. Required for sperm flagellum assembly and stability. The sequence is that of Cilia- and flagella-associated protein 69 from Homo sapiens (Human).